Here is a 1391-residue protein sequence, read N- to C-terminus: DNA-directed RNA polymerase subunit beta' (1391 aa).

Zn(2+)-binding residues include cysteine 70, cysteine 72, cysteine 85, and cysteine 88. Aspartate 461, aspartate 463, and aspartate 465 together coordinate Mg(2+). Zn(2+) contacts are provided by cysteine 809, cysteine 882, cysteine 889, and cysteine 892.

This sequence belongs to the RNA polymerase beta' chain family. In terms of assembly, the RNAP catalytic core consists of 2 alpha, 1 beta, 1 beta' and 1 omega subunit. When a sigma factor is associated with the core the holoenzyme is formed, which can initiate transcription. Mg(2+) serves as cofactor. It depends on Zn(2+) as a cofactor.

The catalysed reaction is RNA(n) + a ribonucleoside 5'-triphosphate = RNA(n+1) + diphosphate. DNA-dependent RNA polymerase catalyzes the transcription of DNA into RNA using the four ribonucleoside triphosphates as substrates. The protein is DNA-directed RNA polymerase subunit beta' of Zymomonas mobilis subsp. mobilis (strain ATCC 31821 / ZM4 / CP4).